A 181-amino-acid polypeptide reads, in one-letter code: Large ribosomal subunit protein uL5 (181 aa).

It belongs to the universal ribosomal protein uL5 family. In terms of assembly, part of the 50S ribosomal subunit; part of the 5S rRNA/L5/L18/L25 subcomplex. Contacts the 5S rRNA and the P site tRNA. Forms a bridge to the 30S subunit in the 70S ribosome.

This is one of the proteins that bind and probably mediate the attachment of the 5S RNA into the large ribosomal subunit, where it forms part of the central protuberance. In the 70S ribosome it contacts protein S13 of the 30S subunit (bridge B1b), connecting the 2 subunits; this bridge is implicated in subunit movement. Contacts the P site tRNA; the 5S rRNA and some of its associated proteins might help stabilize positioning of ribosome-bound tRNAs. The protein is Large ribosomal subunit protein uL5 of Sulfurimonas denitrificans (strain ATCC 33889 / DSM 1251) (Thiomicrospira denitrificans (strain ATCC 33889 / DSM 1251)).